The sequence spans 80 residues: Small ribosomal subunit protein uS17 (80 aa).

The protein belongs to the universal ribosomal protein uS17 family. Part of the 30S ribosomal subunit.

In terms of biological role, one of the primary rRNA binding proteins, it binds specifically to the 5'-end of 16S ribosomal RNA. The sequence is that of Small ribosomal subunit protein uS17 from Cereibacter sphaeroides (strain ATCC 17025 / ATH 2.4.3) (Rhodobacter sphaeroides).